The primary structure comprises 191 residues: Syndecan-2-A (191 aa).

The first 22 residues, 1–22 (MRNVWLIVPFALLAALSGETWA), serve as a signal peptide directing secretion. Residues 23–137 (QADRDLYIDS…NLFHRTEVLA (115 aa)) are Extracellular-facing. The tract at residues 32–60 (STESSGNYPVDDDDYSSGSGSGIPARGDD) is disordered. O-linked (Xyl...) (glycosaminoglycan) serine glycans are attached at residues Ser36, Ser48, Ser50, and Ser52. A helical membrane pass occupies residues 138–158 (AVIAGGGIGFLFAVFLILLLV). Residues 159-191 (YRMRKKDEGSYDLGERKPSSAVYQKAPTKEFYA) are Cytoplasmic-facing. Residues 168–191 (SYDLGERKPSSAVYQKAPTKEFYA) are disordered.

This sequence belongs to the syndecan proteoglycan family. In terms of processing, O-glycosylated; contains both heparan sulfate and chondroitin sulfate.

The protein resides in the membrane. In terms of biological role, cell surface proteoglycan. This Xenopus laevis (African clawed frog) protein is Syndecan-2-A (sdc2-a).